The sequence spans 756 residues: Photosystem I P700 chlorophyll a apoprotein A1 (756 aa).

Transmembrane regions (helical) follow at residues 73–96 (IFSAHFGHLAVIFVWLSGMYFHGA), 159–182 (LYVTAIGGLVMAGLMLFAGWFHYH), 198–222 (MNHHLAGLLGLGSLGWAGHQIHVSL), 298–316 (TAHHHLAIAVLFIIAGHMY), 353–376 (WHAQLAINLAMMGSLSIIVAHHMY), 392–418 (LSLFTHHMWIGGFLIVGGAAHGAIYMV), 440–462 (AIISHLNWVCIFLGFHSFGLYIH), and 537–555 (FLVHHIHAFTIHVTVLILL). [4Fe-4S] cluster-binding residues include C579 and C588. 2 helical membrane-spanning segments follow: residues 595–616 (HVFLGLFWMYNSLSIVIFHFSW) and 670–692 (LSAYGLLFLGAHFVWAFSLMFLF). H681 contacts chlorophyll a'. Chlorophyll a contacts are provided by M689 and Y697. W698 contributes to the phylloquinone binding site. The helical transmembrane segment at 730-750 (AVGVAHYLLGGIATTWAFFLA) threads the bilayer.

This sequence belongs to the PsaA/PsaB family. As to quaternary structure, the PsaA/B heterodimer binds the P700 chlorophyll special pair and subsequent electron acceptors. PSI consists of a core antenna complex that captures photons, and an electron transfer chain that converts photonic excitation into a charge separation. The cyanobacterial PSI reaction center is composed of one copy each of PsaA,B,C,D,E,F,I,J,K,L,M and X, and forms trimeric complexes. Requires PSI electron transfer chain: 5 chlorophyll a, 1 chlorophyll a', 2 phylloquinones and 3 4Fe-4S clusters. PSI core antenna: 90 chlorophyll a, 22 carotenoids, 3 phospholipids and 1 galactolipid. P700 is a chlorophyll a/chlorophyll a' dimer, A0 is one or more chlorophyll a, A1 is one or both phylloquinones and FX is a shared 4Fe-4S iron-sulfur center. as cofactor.

Its subcellular location is the cellular thylakoid membrane. It catalyses the reaction reduced [plastocyanin] + hnu + oxidized [2Fe-2S]-[ferredoxin] = oxidized [plastocyanin] + reduced [2Fe-2S]-[ferredoxin]. Functionally, psaA and PsaB bind P700, the primary electron donor of photosystem I (PSI), as well as the electron acceptors A0, A1 and FX. PSI is a plastocyanin/cytochrome c6-ferredoxin oxidoreductase, converting photonic excitation into a charge separation, which transfers an electron from the donor P700 chlorophyll pair to the spectroscopically characterized acceptors A0, A1, FX, FA and FB in turn. Oxidized P700 is reduced on the lumenal side of the thylakoid membrane by plastocyanin or cytochrome c6. The chain is Photosystem I P700 chlorophyll a apoprotein A1 from Cyanothece sp. (strain PCC 7425 / ATCC 29141).